The sequence spans 208 residues: N-(5'-phosphoribosyl)anthranilate isomerase (208 aa).

It belongs to the TrpF family.

The enzyme catalyses N-(5-phospho-beta-D-ribosyl)anthranilate = 1-(2-carboxyphenylamino)-1-deoxy-D-ribulose 5-phosphate. The protein operates within amino-acid biosynthesis; L-tryptophan biosynthesis; L-tryptophan from chorismate: step 3/5. This Pyrococcus furiosus (strain ATCC 43587 / DSM 3638 / JCM 8422 / Vc1) protein is N-(5'-phosphoribosyl)anthranilate isomerase.